The chain runs to 941 residues: ATP-dependent 6-phosphofructokinase subunit beta (941 aa).

Residues 2–558 form an N-terminal catalytic PFK domain 1 region; the sequence is PDASLFNGTS…HMKNFISTNS (557 aa). ATP-binding positions include Gly-191, 255 to 256, and 285 to 288; these read RC and GDGS. Asp-286 contributes to the Mg(2+) binding site. Beta-D-fructose 6-phosphate-binding positions include 331–333, Arg-368, and 375–377; these read SID and MGR. Asp-333 serves as the catalytic Proton acceptor. Residues Ile-395, 400–405, and Gln-410 each bind ATP; that span reads KPASSR. Beta-D-fructose 6-phosphate is bound by residues Glu-432, Arg-460, and 466–469; that span reads HVQR. Residue 557-558 participates in ATP binding; the sequence is NS. Positions 559 to 572 are interdomain linker; it reads ADHVPPSLPLEKRK. Residues 573–941 form a C-terminal regulatory PFK domain 2 region; it reads KIAIINVGAP…SDMLSGRTSL (369 aa). Residues Arg-643, 701 to 705, Arg-739, 746 to 748, Glu-806, Lys-832, 838 to 841, and Arg-918 each bind beta-D-fructose 2,6-bisphosphate; these read TISNN, QGG, and HVQQ.

This sequence belongs to the phosphofructokinase type A (PFKA) family. ATP-dependent PFK group I subfamily. Eukaryotic two domain clade 'E' sub-subfamily. In terms of assembly, heterododecamer of 4 alpha, 4 beta and 4 gamma chains. The cofactor is Mg(2+).

It is found in the cytoplasm. The enzyme catalyses beta-D-fructose 6-phosphate + ATP = beta-D-fructose 1,6-bisphosphate + ADP + H(+). It participates in carbohydrate degradation; glycolysis; D-glyceraldehyde 3-phosphate and glycerone phosphate from D-glucose: step 3/4. With respect to regulation, allosterically activated by ADP, AMP, or fructose 2,6-bisphosphate, and allosterically inhibited by ATP or citrate. Catalyzes the phosphorylation of D-fructose 6-phosphate to fructose 1,6-bisphosphate by ATP, the first committing step of glycolysis. The protein is ATP-dependent 6-phosphofructokinase subunit beta (PFK2) of Komagataella pastoris (Yeast).